The primary structure comprises 271 residues: Large ribosomal subunit protein uL2cz/uL2cy (271 aa).

2 disordered regions span residues 1–22 (MAKHLYKTPIPSTRKGTVDRQV) and 223–271 (PVDH…RRRK).

This sequence belongs to the universal ribosomal protein uL2 family. Part of the 50S ribosomal subunit.

The protein localises to the plastid. The protein resides in the chloroplast. In Sorghum bicolor (Sorghum), this protein is Large ribosomal subunit protein uL2cz/uL2cy (rpl2-A).